Consider the following 133-residue polypeptide: MQRVTITLDDDLLETLDNLSQRRGYNNRSEAIRDILRGALAQEATQEHGTQGFAVLSYVYEHEKRDLASRIVSTQHHHHDLSVATLHVHINHDDCLEIAVLKGDMGDVQHFADDVIAQRGVRHGHLQCLPKED.

Residues H76, H87, H89, and C95 each coordinate Ni(2+).

This sequence belongs to the transcriptional regulatory CopG/NikR family. Homotetramer. Requires Ni(2+) as cofactor.

Its function is as follows. Transcriptional repressor of the nikABCDE operon. Is active in the presence of excessive concentrations of intracellular nickel. This is Nickel-responsive regulator from Salmonella paratyphi A (strain ATCC 9150 / SARB42).